The primary structure comprises 359 residues: Serine/threonine-protein phosphatase 2A activator 2 (359 aa).

Belongs to the PTPA-type PPIase family.

The protein resides in the cytoplasm. The catalysed reaction is [protein]-peptidylproline (omega=180) = [protein]-peptidylproline (omega=0). In terms of biological role, PPIases accelerate the folding of proteins. It catalyzes the cis-trans isomerization of proline imidic peptide bonds in oligopeptides. Acts as a regulatory subunit for PP2A-like phosphatases modulating their activity or substrate specificity, probably by inducing a conformational change in the catalytic subunit, a direct target of the PPIase. Can reactivate inactive phosphatase PP2A-phosphatase methylesterase complexes (PP2Ai) in presence of ATP and Mg(2+) by dissociating the inactive form from the complex. In Eremothecium gossypii (strain ATCC 10895 / CBS 109.51 / FGSC 9923 / NRRL Y-1056) (Yeast), this protein is Serine/threonine-protein phosphatase 2A activator 2 (RRD2).